Here is a 346-residue protein sequence, read N- to C-terminus: Phosphate acyltransferase (346 aa).

It belongs to the PlsX family. As to quaternary structure, homodimer. Probably interacts with PlsY.

It is found in the cytoplasm. It carries out the reaction a fatty acyl-[ACP] + phosphate = an acyl phosphate + holo-[ACP]. It functions in the pathway lipid metabolism; phospholipid metabolism. Its function is as follows. Catalyzes the reversible formation of acyl-phosphate (acyl-PO(4)) from acyl-[acyl-carrier-protein] (acyl-ACP). This enzyme utilizes acyl-ACP as fatty acyl donor, but not acyl-CoA. In Deinococcus geothermalis (strain DSM 11300 / CIP 105573 / AG-3a), this protein is Phosphate acyltransferase.